Here is a 116-residue protein sequence, read N- to C-terminus: Large ribosomal subunit protein uL24 (116 aa).

Belongs to the universal ribosomal protein uL24 family. As to quaternary structure, part of the 50S ribosomal subunit.

In terms of biological role, one of two assembly initiator proteins, it binds directly to the 5'-end of the 23S rRNA, where it nucleates assembly of the 50S subunit. Located at the polypeptide exit tunnel on the outside of the subunit. This is Large ribosomal subunit protein uL24 from Methanosarcina barkeri (strain Fusaro / DSM 804).